A 273-amino-acid chain; its full sequence is Beta-lactamase OXA-23 (273 aa).

An N-terminal signal peptide occupies residues 1 to 17 (MNKYFTCYVVASLFLSG). Serine 79 serves as the catalytic Acyl-ester intermediate. A beta-lactam is bound by residues serine 79, lysine 82, serine 126, threonine 217, tryptophan 219, and arginine 259. Lysine 82 is subject to N6-carboxylysine.

This sequence belongs to the class-D beta-lactamase family. As to quaternary structure, monomer. Post-translationally, carboxylated on the epsilon-amino group of a lysine, with the resulting carbamate functional group serving as a general base. Probably N-carboxylated at Lys-82 at neutral pH in vivo and undergoes complete N-decarboxylation, at pH 4.1, in vitro.

It localises to the periplasm. The catalysed reaction is a beta-lactam + H2O = a substituted beta-amino acid. With respect to regulation, inhibited by the desmethyl carbapenem, MA-1-206, via a covalent binding to Ser-79. Class D beta-lactamase which confers resistance to the beta-lactam antibiotics, including ampicillin, and carbapenems such as imipenem and meropenem. Acts via hydrolysis of the beta-lactam ring. Has penicillin-, cephalosporin- and carbapenem-hydrolyzing activities, but lacks ceftazidime-hydrolyzing activity. In Acinetobacter baumannii, this protein is Beta-lactamase OXA-23.